The following is a 245-amino-acid chain: tRNA1(Val) (adenine(37)-N6)-methyltransferase (245 aa).

This sequence belongs to the methyltransferase superfamily. tRNA (adenine-N(6)-)-methyltransferase family.

The protein resides in the cytoplasm. The enzyme catalyses adenosine(37) in tRNA1(Val) + S-adenosyl-L-methionine = N(6)-methyladenosine(37) in tRNA1(Val) + S-adenosyl-L-homocysteine + H(+). In terms of biological role, specifically methylates the adenine in position 37 of tRNA(1)(Val) (anticodon cmo5UAC). In Escherichia coli O157:H7 (strain EC4115 / EHEC), this protein is tRNA1(Val) (adenine(37)-N6)-methyltransferase.